Here is a 369-residue protein sequence, read N- to C-terminus: Proton-coupled zinc antiporter SLC30A8 (369 aa).

The Cytoplasmic portion of the chain corresponds to 1 to 79; that stretch reads MEFLERTYLV…AKWKLCSASA (79 aa). The disordered stretch occupies residues 31–52; that stretch reads PVNKDQCPRERPEELESGGMYH. Over residues 32-44 the composition is skewed to basic and acidic residues; the sequence is VNKDQCPRERPEE. 3 residues coordinate Zn(2+): histidine 52, cysteine 53, and histidine 54. An HCH Motif; seals regulatory zinc-binding pocket motif is present at residues 52–54; it reads HCH. Residues 80–100 form a helical membrane-spanning segment; the sequence is ICFIFMIAEVVGGHIAGSLAV. The Lumenal, vesicle portion of the chain corresponds to 101–103; sequence VTD. A helical membrane pass occupies residues 104–124; the sequence is AAHLLIDLTSFLLSLFSLWLS. Positions 106, 110, and 137 each coordinate Zn(2+). Topologically, residues 125–140 are cytoplasmic; the sequence is SKPPSKRLTFGWHRAE. Residues 141-161 form a helical membrane-spanning segment; sequence ILGALLSILCIWVVTGVLVYL. Over 162–175 the chain is Lumenal, vesicle; that stretch reads ACERLLYPDYQIQA. The helical transmembrane segment at 176–196 threads the bilayer; it reads TVMIIVSSCAVAANIVLTVVL. Topologically, residues 197 to 217 are cytoplasmic; that stretch reads HQRCLGHNHKEVQANASVRAA. The helical transmembrane segment at 218–238 threads the bilayer; the sequence is FVHALGDLFQSISVLISALII. The Zn(2+) site is built by histidine 220 and aspartate 224. At 239-245 the chain is on the lumenal, vesicle side; that stretch reads YFKPEYK. A helical transmembrane segment spans residues 246-266; that stretch reads IADPICTFIFSILVLASTITI. At 267 to 369 the chain is on the cytoplasmic side; sequence LKDFSILLME…DCLFCEDPCD (103 aa). Zn(2+) is bound by residues histidine 301, histidine 318, histidine 345, glutamate 352, cysteine 361, and cysteine 364.

The protein belongs to the cation diffusion facilitator (CDF) transporter (TC 2.A.4) family. SLC30A subfamily. In terms of assembly, homodimer. In terms of tissue distribution, in the endocrine pancreas, expressed in insulin-producing beta cells. Expressed at relatively high levels in subcutaneous fat tissue from lean persons; much lower levels in visceral fat, whether from lean or obese individuals, and in subcutaneous fat tissue from obese individuals. Expressed in peripheral blood mononuclear cells, including T-cells and B-cells, with great variation among individuals ranging from negative to strongly positive.

The protein resides in the cytoplasmic vesicle. It localises to the secretory vesicle membrane. It is found in the cell membrane. The enzyme catalyses Zn(2+)(in) + 2 H(+)(out) = Zn(2+)(out) + 2 H(+)(in). In terms of biological role, proton-coupled zinc ion antiporter mediating the entry of zinc into the lumen of pancreatic beta cell secretory granules, thereby regulating insulin secretion. The protein is Proton-coupled zinc antiporter SLC30A8 of Homo sapiens (Human).